The primary structure comprises 124 residues: Small ribosomal subunit protein uS12 (124 aa).

The segment at 1–28 (MPTINQLVRKGRTPKVSKTKAPALKGSP) is disordered. The segment covering 9–18 (RKGRTPKVSK) has biased composition (basic residues). Asp-89 is modified (3-methylthioaspartic acid).

This sequence belongs to the universal ribosomal protein uS12 family. As to quaternary structure, part of the 30S ribosomal subunit. Contacts proteins S8 and S17. May interact with IF1 in the 30S initiation complex.

With S4 and S5 plays an important role in translational accuracy. Functionally, interacts with and stabilizes bases of the 16S rRNA that are involved in tRNA selection in the A site and with the mRNA backbone. Located at the interface of the 30S and 50S subunits, it traverses the body of the 30S subunit contacting proteins on the other side and probably holding the rRNA structure together. The combined cluster of proteins S8, S12 and S17 appears to hold together the shoulder and platform of the 30S subunit. This chain is Small ribosomal subunit protein uS12, found in Paenarthrobacter aurescens (strain TC1).